A 539-amino-acid chain; its full sequence is MAKDIKFSSDARAAMVRGVDTLADTVKVTLGPKGRNVVLEKAFGSPLITNDGVTIAKEIELEDHFENMGAKLVSEVASKTNDIAGDGTTTATVLTQAIVREGLKNVTAGANPIGIRRGIEAAVAAAVEELKVIAQPVANKEAIAQVAAVSSRSEKVGEYISEAMERVGNDGVITIEESRGMETELEVVEGMQFDRGYLSQYMVTDNEKMVADLENPYILVTDKKISNIQDILPLLEEVLKTSRPLLIIADDVAGEALPTLVLNKIRGTFNVVAVKAPGFGDRRKAMLEDIAVLTGATVITEDLGLELKDATMESLGQASKVTVDKDSTVIVEGAGSAEAIANRVNLIKSQLETTTSEFDREKLQERLAKLSGGVAVIKVGAATETALKEMKLRIEDALNATRAAVEEGIVAGGGTALVNVIAKVAELDLEGDDATGRNIVLRALEEPVRQIAYNAGYEGSVIIDKLKNSPVGTGFNAANGEWVDMVESGIIDPVKVTRSALQNAASVASLILTTEAVVADKPEQKAPAAPATDPGMMGY.

ATP-binding positions include 29–32, 86–90, Gly-413, 476–478, and Asp-492; these read TLGP, DGTTT, and NAA.

This sequence belongs to the chaperonin (HSP60) family. In terms of assembly, forms a cylinder of 14 subunits composed of two heptameric rings stacked back-to-back. Interacts with the co-chaperonin GroES.

The protein localises to the cytoplasm. It catalyses the reaction ATP + H2O + a folded polypeptide = ADP + phosphate + an unfolded polypeptide.. Functionally, together with its co-chaperonin GroES, plays an essential role in assisting protein folding. The GroEL-GroES system forms a nano-cage that allows encapsulation of the non-native substrate proteins and provides a physical environment optimized to promote and accelerate protein folding. This is Chaperonin GroEL from Streptococcus thermophilus (strain CNRZ 1066).